The sequence spans 447 residues: Phosphoglucosamine mutase (447 aa).

Serine 107 acts as the Phosphoserine intermediate in catalysis. Mg(2+)-binding residues include serine 107, aspartate 246, aspartate 248, and aspartate 250. Serine 107 is subject to Phosphoserine.

This sequence belongs to the phosphohexose mutase family. Mg(2+) is required as a cofactor. In terms of processing, activated by phosphorylation.

The enzyme catalyses alpha-D-glucosamine 1-phosphate = D-glucosamine 6-phosphate. Its function is as follows. Catalyzes the conversion of glucosamine-6-phosphate to glucosamine-1-phosphate. This is Phosphoglucosamine mutase from Ralstonia pickettii (strain 12J).